Reading from the N-terminus, the 351-residue chain is Nicotinate-nucleotide--dimethylbenzimidazole phosphoribosyltransferase (351 aa).

Glutamate 318 serves as the catalytic Proton acceptor.

The protein belongs to the CobT family.

The catalysed reaction is 5,6-dimethylbenzimidazole + nicotinate beta-D-ribonucleotide = alpha-ribazole 5'-phosphate + nicotinate + H(+). It participates in nucleoside biosynthesis; alpha-ribazole biosynthesis; alpha-ribazole from 5,6-dimethylbenzimidazole: step 1/2. Functionally, catalyzes the synthesis of alpha-ribazole-5'-phosphate from nicotinate mononucleotide (NAMN) and 5,6-dimethylbenzimidazole (DMB). The polypeptide is Nicotinate-nucleotide--dimethylbenzimidazole phosphoribosyltransferase (Shewanella frigidimarina (strain NCIMB 400)).